The chain runs to 382 residues: Lipid-A-disaccharide synthase (382 aa).

The protein belongs to the LpxB family.

It catalyses the reaction 2-N,3-O-bis[(3R)-3-hydroxytetradecanoyl]-alpha-D-glucosaminyl 1-phosphate + UDP-2-N,3-O-bis[(3R)-3-hydroxytetradecanoyl]-alpha-D-glucosamine = lipid A disaccharide (E. coli) + UDP + H(+). The catalysed reaction is a lipid X + a UDP-2-N,3-O-bis[(3R)-3-hydroxyacyl]-alpha-D-glucosamine = a lipid A disaccharide + UDP + H(+). The protein operates within glycolipid biosynthesis; lipid IV(A) biosynthesis; lipid IV(A) from (3R)-3-hydroxytetradecanoyl-[acyl-carrier-protein] and UDP-N-acetyl-alpha-D-glucosamine: step 5/6. In terms of biological role, condensation of UDP-2,3-diacylglucosamine and 2,3-diacylglucosamine-1-phosphate to form lipid A disaccharide, a precursor of lipid A, a phosphorylated glycolipid that anchors the lipopolysaccharide to the outer membrane of the cell. This chain is Lipid-A-disaccharide synthase, found in Escherichia coli (strain K12 / MC4100 / BW2952).